A 377-amino-acid chain; its full sequence is Chaperone protein DnaJ (377 aa).

A J domain is found at 5–70 (DYYQVLGVAK…QKRAAYDQYG (66 aa)). The segment at 137-215 (GYDTQIRVPS…CHGAGKTKET (79 aa)) adopts a CR-type zinc-finger fold. Zn(2+)-binding residues include C150, C153, C167, C170, C189, C192, C203, and C206. 4 CXXCXGXG motif repeats span residues 150 to 157 (CEICHGSG), 167 to 174 (CPTCNGSG), 189 to 196 (CPKCHGTG), and 203 to 210 (CTHCHGAG).

Belongs to the DnaJ family. As to quaternary structure, homodimer. Zn(2+) is required as a cofactor.

It is found in the cytoplasm. Its function is as follows. Participates actively in the response to hyperosmotic and heat shock by preventing the aggregation of stress-denatured proteins and by disaggregating proteins, also in an autonomous, DnaK-independent fashion. Unfolded proteins bind initially to DnaJ; upon interaction with the DnaJ-bound protein, DnaK hydrolyzes its bound ATP, resulting in the formation of a stable complex. GrpE releases ADP from DnaK; ATP binding to DnaK triggers the release of the substrate protein, thus completing the reaction cycle. Several rounds of ATP-dependent interactions between DnaJ, DnaK and GrpE are required for fully efficient folding. Also involved, together with DnaK and GrpE, in the DNA replication of plasmids through activation of initiation proteins. The sequence is that of Chaperone protein DnaJ from Paraburkholderia phymatum (strain DSM 17167 / CIP 108236 / LMG 21445 / STM815) (Burkholderia phymatum).